The primary structure comprises 92 residues: Small ribosomal subunit protein uS17 (92 aa).

It belongs to the universal ribosomal protein uS17 family. In terms of assembly, part of the 30S ribosomal subunit.

Functionally, one of the primary rRNA binding proteins, it binds specifically to the 5'-end of 16S ribosomal RNA. The sequence is that of Small ribosomal subunit protein uS17 from Corynebacterium diphtheriae (strain ATCC 700971 / NCTC 13129 / Biotype gravis).